The sequence spans 451 residues: Molybdate-anion transporter (451 aa).

A run of 12 helical transmembrane segments spans residues 1-21, 45-65, 79-99, 130-150, 180-200, 201-221, 251-271, 281-301, 316-336, 346-366, 378-398, and 410-430; these read MLVT…VLEF, YDFY…GPYL, IAII…VSVP, FVLM…FSCF, NGGI…WLGL, GPAS…VLVI, VLLL…FIFL, APLG…SSLY, VLCL…FSTA, LLAF…MRFL, GVLN…LLVL, and MFSL…SLFT.

It belongs to the major facilitator superfamily.

It localises to the cell membrane. In terms of biological role, mediates high-affinity intracellular uptake of the rare oligo-element molybdenum. The sequence is that of Molybdate-anion transporter (mfsd5) from Xenopus laevis (African clawed frog).